An 811-amino-acid chain; its full sequence is Receptor-like protein 52 (811 aa).

Residues 1 to 22 form the signal peptide; it reads MTFLPLLFIFFFLTSIPFPAFS. Topologically, residues 23-770 are extracellular; the sequence is QYNDRSTLLN…EDEEEVMNWT (748 aa). N-linked (GlcNAc...) asparagine glycosylation is found at Asn-47, Asn-64, Asn-74, Asn-93, Asn-109, and Asn-124. 6 LRR repeats span residues 62–86, 87–110, 112–134, 135–159, 161–183, and 184–208; these read AGNV…ICNF, PNLK…LYNC, KLQY…INRL, APKL…IGRI, KLKV…IGDL, and SELE…EFGK. The stretch at 211-233 is one LRR 7; degenerate repeat; sequence KLKYMWLEEMNLIGEISAVVFEN. 5 N-linked (GlcNAc...) asparagine glycosylation sites follow: Asn-233, Asn-246, Asn-260, Asn-295, and Asn-304. LRR repeat units lie at residues 234–258, 260–281, 282–305, 307–329, 330–354, 356–377, 379–401, and 403–427; these read MTDL…LFGL, NLTE…SISA, KNLV…IGNL, NLEL…IGKL, PELK…GFIS, LERF…LCHG, KLQS…LGDC, and TLSS…TRSN. 6 N-linked (GlcNAc...) asparagine glycosylation sites follow: Asn-389, Asn-422, Asn-429, Asn-455, Asn-464, and Asn-485. LRR repeat units lie at residues 441–465, 466–489, 491–511, 512–537, 539–557, 558–581, 625–649, 650–673, 674–697, and 699–722; these read LHSL…IANL, STLE…ISTS, KSID…LVRI, SSLE…SMQQ, QVLV…QNGF, SKLR…FFVN, LNTF…VGLL, KELH…MGNL, IELE…LGKL, and YLAY…QFQT. Asn-525 carries an N-linked (GlcNAc...) asparagine glycan. N-linked (GlcNAc...) asparagine glycosylation is found at Asn-571 and Asn-581. Residue Asn-656 is glycosylated (N-linked (GlcNAc...) asparagine). A glycan (N-linked (GlcNAc...) asparagine) is linked at Asn-704. Residues 771–791 traverse the membrane as a helical segment; it reads AAAIGSIPGISIGLTMGYILV. Residues 792-811 lie on the Cytoplasmic side of the membrane; sequence SYKPEWLMNSGRNKRRIKPI.

The protein belongs to the RLP family.

It is found in the cell membrane. Functionally, required for defense against powdery mildew pathogen. This is Receptor-like protein 52 from Arabidopsis thaliana (Mouse-ear cress).